Consider the following 64-residue polypeptide: UPF0337 protein SH2043 (64 aa).

The interval 1–64 (MAEDKFEQAK…DKVKGNNDNK (64 aa)) is disordered. The span at 22-64 (DNKDLEKEGQNDKASGKAKEAVENVKNKANDLIDKVKGNNDNK) shows a compositional bias: basic and acidic residues.

Belongs to the UPF0337 (CsbD) family.

The sequence is that of UPF0337 protein SH2043 from Staphylococcus haemolyticus (strain JCSC1435).